We begin with the raw amino-acid sequence, 267 residues long: Cilia- and flagella-associated protein 300 (267 aa).

Belongs to the CFAP300 family.

It is found in the cytoplasm. The protein localises to the cytoskeleton. The protein resides in the cilium axoneme. Its function is as follows. Cilium- and flagellum-specific protein that plays a role in axonemal structure organization and motility. May play a role in outer and inner dynein arm assembly. This chain is Cilia- and flagella-associated protein 300, found in Xenopus tropicalis (Western clawed frog).